The sequence spans 450 residues: Trehalose/maltose-binding protein MalE (450 aa).

The first 24 residues, 1–24, serve as a signal peptide directing secretion; the sequence is MNVKKVLLGLFLVGVLGIAVVASG. Positions 57, 84, 89, 110, 161, 163, 217, 279, 297, 299, 334, 335, 371, and 404 each coordinate alpha,alpha-trehalose.

Belongs to the bacterial solute-binding protein 1 family. The complex is composed of two ATP-binding proteins (MalK), two transmembrane proteins (MalG and MalF) and a solute-binding protein (MalE). Glycosylated.

It is found in the cell membrane. In terms of biological role, part of the ABC transporter complex MalEFGK involved in trehalose/maltose import. Binds maltose and trehalose. This is Trehalose/maltose-binding protein MalE (malE) from Thermococcus litoralis (strain ATCC 51850 / DSM 5473 / JCM 8560 / NS-C).